Consider the following 352-residue polypeptide: MNPTPSETSLDPRVARLIDANLDRAREGLRVVEDWCRFGLEQQDLVVRLKDWRQRLGRLHHDSYKQARSTSTDTGAGLKHPAQLDRHSPDRVVAANCARAQEALRVLEEYGRTIDPALAAEAAAIRYGLYDLEVTCLNATLGARRRNKLKDACLCLITTPCDDLTDRVEAALRNGVGMVQYRCKAGNDRERLQEAQQLRQLCNKFGALLLINDRVDLALAVDADGVHLGQEDMPSEVARDLLGVDRLLGRSTHSIDQVHQAQQEPIDYLGFGPIHSTAVKPERNPVGVELLAKATAISQRPVFAIGGITPANLPALLMAGGQRAAVIGAIMHSEDSGQATRHLLQQLDQATI.

The tract at residues 1 to 128 (MNPTPSETSL…AAEAAAIRYG (128 aa)) is unknown. A disordered region spans residues 63–85 (SYKQARSTSTDTGAGLKHPAQLD). The segment at 129-352 (LYDLEVTCLN…LLQQLDQATI (224 aa)) is thiamine-phosphate synthase. 4-amino-2-methyl-5-(diphosphooxymethyl)pyrimidine-binding positions include 180 to 184 (QYRCK) and Asn212. Residues Asp213 and Asp232 each coordinate Mg(2+). 4-amino-2-methyl-5-(diphosphooxymethyl)pyrimidine contacts are provided by Ser251 and Lys280. Gly307 contacts 2-[(2R,5Z)-2-carboxy-4-methylthiazol-5(2H)-ylidene]ethyl phosphate.

It belongs to the thiamine-phosphate synthase family. Mg(2+) serves as cofactor.

The enzyme catalyses 2-[(2R,5Z)-2-carboxy-4-methylthiazol-5(2H)-ylidene]ethyl phosphate + 4-amino-2-methyl-5-(diphosphooxymethyl)pyrimidine + 2 H(+) = thiamine phosphate + CO2 + diphosphate. It catalyses the reaction 2-(2-carboxy-4-methylthiazol-5-yl)ethyl phosphate + 4-amino-2-methyl-5-(diphosphooxymethyl)pyrimidine + 2 H(+) = thiamine phosphate + CO2 + diphosphate. The catalysed reaction is 4-methyl-5-(2-phosphooxyethyl)-thiazole + 4-amino-2-methyl-5-(diphosphooxymethyl)pyrimidine + H(+) = thiamine phosphate + diphosphate. The protein operates within cofactor biosynthesis; thiamine diphosphate biosynthesis; thiamine phosphate from 4-amino-2-methyl-5-diphosphomethylpyrimidine and 4-methyl-5-(2-phosphoethyl)-thiazole: step 1/1. In terms of biological role, condenses 4-methyl-5-(beta-hydroxyethyl)thiazole monophosphate (THZ-P) and 2-methyl-4-amino-5-hydroxymethyl pyrimidine pyrophosphate (HMP-PP) to form thiamine monophosphate (TMP). The protein is Thiamine-phosphate synthase of Synechococcus sp. (strain CC9605).